Here is a 362-residue protein sequence, read N- to C-terminus: Aminomethyltransferase (362 aa).

The protein belongs to the GcvT family. In terms of assembly, the glycine cleavage system is composed of four proteins: P, T, L and H.

The enzyme catalyses N(6)-[(R)-S(8)-aminomethyldihydrolipoyl]-L-lysyl-[protein] + (6S)-5,6,7,8-tetrahydrofolate = N(6)-[(R)-dihydrolipoyl]-L-lysyl-[protein] + (6R)-5,10-methylene-5,6,7,8-tetrahydrofolate + NH4(+). The glycine cleavage system catalyzes the degradation of glycine. In Listeria monocytogenes serotype 4a (strain HCC23), this protein is Aminomethyltransferase.